The primary structure comprises 299 residues: GTP cyclohydrolase FolE2 (299 aa).

The disordered stretch occupies residues 1–25 (MKTKQWPSKTERHKRFGSVPPVAGK).

This sequence belongs to the GTP cyclohydrolase IV family.

It carries out the reaction GTP + H2O = 7,8-dihydroneopterin 3'-triphosphate + formate + H(+). It participates in cofactor biosynthesis; 7,8-dihydroneopterin triphosphate biosynthesis; 7,8-dihydroneopterin triphosphate from GTP: step 1/1. In terms of biological role, converts GTP to 7,8-dihydroneopterin triphosphate. The polypeptide is GTP cyclohydrolase FolE2 (Halalkalibacterium halodurans (strain ATCC BAA-125 / DSM 18197 / FERM 7344 / JCM 9153 / C-125) (Bacillus halodurans)).